The chain runs to 156 residues: Aspercryptin biosynthesis cluster protein B (156 aa).

The N-terminal stretch at 1-39 (MRMANRIGAGRKSALQLSHLRTRLTSSAAAVATAPTLDP) is a signal peptide.

The protein belongs to the YciI family.

It functions in the pathway secondary metabolite biosynthesis. Part of the gene cluster that mediates the biosynthesis of aspercryptins, linear lipopeptides built from six amino acids including 2 highly unusual and nonproteogenic amino acids, 2-amino-octanoic acid (2aoa) and 2-amino-dodecanol (2adol). The core structure of aspercryptins is as follows: Ser/Ala-Thr-Ile/Val-2aoa-Aasn-2adol. The first step of aspercryptin biosynthesis is the generation of the fatty acid precursors, octanoic and dodecanoic acids, by the FAS subunits atnF and atnM. The fatty acid precursors are likely transformed into the corresponding alpha-amino fatty acids in three steps. First, they are hydroxylated by the cytochrome P450 monooxygenase atnE, then oxidized to the corresponding alpha-keto acids by the NAD(P)-dependent oxidoreductase atnD, and finally converted to the alpha-amino fatty acids by the PLP-dependent aminotransferases atnH or atnJ. the alpha-amino fatty acids, 2-amino-octanoic and 2-amino-dodecanoic acids, are recognized, activated, and covalently tethered to the NRPS atnA by its fourth and sixth adenylation domains. The second module of atnA is the Thr module and contains an epimerase (E) domain responsible for the epimerization of Thr to D-allo-Thr. Additionally, despite atnA having only one epimerase domain, the first amino acid of aspercryptin A1 is D-Ser, suggesting that serine is either loaded directly as D-Ser on the first module or that the epimerase domain in the threonine module epimerizes both L-Ser and L-Thr. After condensation of the hexapeptide of aspercryptin, the C-terminal reductase (TE) domain might be involved in the reductive release and production of the aldehyde hexapeptide. Further reduction would generate aspercryptins. The variety of aspercryptins produced reflects the flexibility of the atnA NRPS, allowing incorporation of alanine instead of serine, valine for isoleucine, and a C10 fatty amino alcohol instead of the C12 version. AtnB seems to be involved in the selectivity for Ile versus Val by the third module. Moreover, type B, C and D aspercryptins have an additional N-terminal cichorine, acetyl and propionyl group respectively. The chain is Aspercryptin biosynthesis cluster protein B from Emericella nidulans (strain FGSC A4 / ATCC 38163 / CBS 112.46 / NRRL 194 / M139) (Aspergillus nidulans).